A 324-amino-acid polypeptide reads, in one-letter code: Delta-aminolevulinic acid dehydratase (324 aa).

Zn(2+) contacts are provided by cysteine 118, cysteine 120, and cysteine 128. Residue lysine 195 is the Schiff-base intermediate with substrate of the active site. 2 residues coordinate 5-aminolevulinate: arginine 205 and arginine 217. Glutamate 233 contributes to the Mg(2+) binding site. Catalysis depends on lysine 248, which acts as the Schiff-base intermediate with substrate. 2 residues coordinate 5-aminolevulinate: serine 274 and tyrosine 313.

This sequence belongs to the ALAD family. As to quaternary structure, homooctamer. The cofactor is Zn(2+).

It carries out the reaction 2 5-aminolevulinate = porphobilinogen + 2 H2O + H(+). It participates in porphyrin-containing compound metabolism; protoporphyrin-IX biosynthesis; coproporphyrinogen-III from 5-aminolevulinate: step 1/4. Its function is as follows. Catalyzes an early step in the biosynthesis of tetrapyrroles. Binds two molecules of 5-aminolevulinate per subunit, each at a distinct site, and catalyzes their condensation to form porphobilinogen. This Staphylococcus aureus (strain NCTC 8325 / PS 47) protein is Delta-aminolevulinic acid dehydratase (hemB).